The sequence spans 545 residues: Ribulokinase (545 aa).

This sequence belongs to the ribulokinase family.

It carries out the reaction D-ribulose + ATP = D-ribulose 5-phosphate + ADP + H(+). The enzyme catalyses L-ribulose + ATP = L-ribulose 5-phosphate + ADP + H(+). It functions in the pathway carbohydrate degradation; L-arabinose degradation via L-ribulose; D-xylulose 5-phosphate from L-arabinose (bacterial route): step 2/3. This chain is Ribulokinase, found in Staphylococcus aureus (strain Mu3 / ATCC 700698).